The primary structure comprises 138 residues: Protein FAM136A (138 aa).

Residue Ala-2 is modified to N-acetylalanine. Phosphothreonine occurs at positions 124 and 126.

Belongs to the FAM136 family.

The protein is Protein FAM136A (FAM136A) of Bos taurus (Bovine).